A 135-amino-acid polypeptide reads, in one-letter code: Large ribosomal subunit protein uL16c (135 aa).

Belongs to the universal ribosomal protein uL16 family. In terms of assembly, part of the 50S ribosomal subunit.

The protein resides in the plastid. It localises to the chloroplast. The polypeptide is Large ribosomal subunit protein uL16c (Gossypium barbadense (Sea Island cotton)).